A 298-amino-acid chain; its full sequence is Probable 3-mercaptopyruvate sulfurtransferase (298 aa).

The Rhodanese 1 domain occupies 24 to 141; sequence NAQKTVLLDA…WKTEGLELET (118 aa). Residues 142–175 form a hinge region; that stretch reads GEPRTPKPVVYEGAKLNKDLVASFDDIVKVIESP. Ser-164 is modified (phosphoserine). Residues 176-292 enclose the Rhodanese 2 domain; it reads DAAGVHIVDA…YGKRANEDSS (117 aa). Substrate is bound at residue Arg-190. Catalysis depends on Cys-252, which acts as the Cysteine persulfide intermediate.

It localises to the mitochondrion. The catalysed reaction is 2-oxo-3-sulfanylpropanoate + [thioredoxin]-dithiol = [thioredoxin]-disulfide + hydrogen sulfide + pyruvate + H(+). Functionally, required for formation of the 2-thio group of the 5-methoxycarbonylmethyl-2-thiouridine modified base in some tRNAs. This is Probable 3-mercaptopyruvate sulfurtransferase (tum1) from Schizosaccharomyces pombe (strain 972 / ATCC 24843) (Fission yeast).